The primary structure comprises 949 residues: Translation initiation factor IF-2 (949 aa).

3 disordered regions span residues 54–183 (FLKP…EAAP), 217–288 (LPAA…EVAL), and 305–357 (EVVA…EMQA). 2 stretches are compositionally biased toward basic and acidic residues: residues 67–92 (DQEK…ERHI) and 101–164 (IEAK…EEAA). Low complexity-rich tracts occupy residues 165–183 (RAAA…EAAP) and 217–228 (LPAAAPAAPSAP). 2 stretches are compositionally biased toward basic and acidic residues: residues 235–288 (PVEE…EVAL) and 330–339 (KYQDNEDRLQ). Residues 445 to 619 (TRPPVITVMG…EMLNLQSNPT (175 aa)) enclose the tr-type G domain. A G1 region spans residues 454 to 461 (GHVDHGKT). A GTP-binding site is contributed by 454 to 461 (GHVDHGKT). A G2 region spans residues 479–483 (GITQH). Residues 501–504 (DTPG) are G3. Residues 501-505 (DTPGH) and 555-558 (NKID) each bind GTP. The interval 555–558 (NKID) is G4. The segment at 591–593 (SAK) is G5.

Belongs to the TRAFAC class translation factor GTPase superfamily. Classic translation factor GTPase family. IF-2 subfamily.

It localises to the cytoplasm. Functionally, one of the essential components for the initiation of protein synthesis. Protects formylmethionyl-tRNA from spontaneous hydrolysis and promotes its binding to the 30S ribosomal subunits. Also involved in the hydrolysis of GTP during the formation of the 70S ribosomal complex. This Magnetococcus marinus (strain ATCC BAA-1437 / JCM 17883 / MC-1) protein is Translation initiation factor IF-2.